The chain runs to 346 residues: UPF0421 protein OB2406 (346 aa).

4 helical membrane-spanning segments follow: residues 16 to 36, 55 to 75, 102 to 122, and 128 to 148; these read IAVLLTAYICEWIGWSPVFAV, LIRFPASAIGAAYAVLFIALF, LLVATITSVAMVDVIHSNYVM, and LFTTTIGLSVSTLVNMFLLPP.

It belongs to the UPF0421 family.

The protein resides in the cell membrane. The sequence is that of UPF0421 protein OB2406 from Oceanobacillus iheyensis (strain DSM 14371 / CIP 107618 / JCM 11309 / KCTC 3954 / HTE831).